Here is a 396-residue protein sequence, read N- to C-terminus: E3 ubiquitin-protein transferase MAEA (396 aa).

Residues 1 to 124 (MAVQESAAQL…AAASMWKRKR (124 aa)) form an extracellular and involved in cell to cell contact region. Threonine 28 carries the phosphothreonine modification. Residues 121 to 153 (KRKRMDRMMVEHLLRCGYYNTAVKLARQSGIED) enclose the LisH domain. The CTLH domain maps to 159–216 (MFLTAKEVEESLERRETATCLAWCHDNKSRLRKMKSCLEFSLRIQEFIELVRQNKRLD). An RING-Gid-type zinc finger spans residues 314–381 (CPVCSRSLNK…QDDKVVCPRT (68 aa)).

As to quaternary structure, identified in the CTLH complex that contains GID4, RANBP9 and/or RANBP10, MKLN1, MAEA, RMND5A (or alternatively its paralog RMND5B), GID8, ARMC8, WDR26 and YPEL5. Within this complex, MAEA, RMND5A (or alternatively its paralog RMND5B), GID8, WDR26, and RANBP9 and/or RANBP10 form the catalytic core, while GID4, MKLN1, ARMC8 and YPEL5 have ancillary roles. Interacts with F-actin. Autoubiquitinated as component of the CTLH E3 ubiquitin-protein ligase complex (in vitro). In terms of tissue distribution, detected in embryonic fibroblasts. Detected in macrophages. Detected in heart. liver, spleen and kidney (at protein level).

The protein localises to the cytoplasm. It is found in the nucleus. The protein resides in the nucleoplasm. It localises to the nucleus matrix. Its subcellular location is the cell membrane. The protein localises to the cytoskeleton. It catalyses the reaction S-ubiquitinyl-[E2 ubiquitin-conjugating enzyme]-L-cysteine + [acceptor protein]-L-lysine = [E2 ubiquitin-conjugating enzyme]-L-cysteine + N(6)-ubiquitinyl-[acceptor protein]-L-lysine.. Its function is as follows. Core component of the CTLH E3 ubiquitin-protein ligase complex that selectively accepts ubiquitin from UBE2H and mediates ubiquitination and subsequent proteasomal degradation of the transcription factor HBP1. MAEA and RMND5A are both required for catalytic activity of the CTLH E3 ubiquitin-protein ligase complex. MAEA is required for normal cell proliferation. The CTLH E3 ubiquitin-protein ligase complex is not required for the degradation of enzymes involved in gluconeogenesis, such as FBP1. Plays a role in erythroblast enucleation during erythrocyte maturation and in the development of mature macrophages. Mediates the attachment of erythroid cell to mature macrophages; this MAEA-mediated contact inhibits erythroid cell apoptosis. Participates in erythroblastic island formation, which is the functional unit of definitive erythropoiesis. Associates with F-actin to regulate actin distribution in erythroblasts and macrophages. May contribute to nuclear architecture and cells division events. The sequence is that of E3 ubiquitin-protein transferase MAEA (Maea) from Mus musculus (Mouse).